The chain runs to 178 residues: Protein Vhl (178 aa).

This sequence belongs to the VHL family. As to quaternary structure, part of a complex with Cul2, Roc1a/Rbx1 and the elongin BC complex. Interacts with sima/Hif1a. Interacts with itself. Interacts with mgr and betaTub56D/tubulin beta-1 chain. Interacts with tubulin alpha-beta heterodimers by itself or in complex with mgr. Interacts with microtubules (MTs).

The protein operates within protein modification; protein ubiquitination. Functionally, involved in development of tracheal vasculature. Probably involved in halting cell migration at the end of vascular tube outgrowth. Possesses E3 ubiquitin ligase activity when in complex with Elongin BC complex, Cul2 and Rox1a/Rbx1, and can target sima/Hif1a for ubiquitination. May play a critical role in promoting microtubule stabilization when tubulins are correctly folded by the prefoldin complex. If tubulin is incorrectly folded, may promote its degradation. In Drosophila melanogaster (Fruit fly), this protein is Protein Vhl.